We begin with the raw amino-acid sequence, 163 residues long: Probable chemoreceptor glutamine deamidase CheD (163 aa).

This sequence belongs to the CheD family.

The enzyme catalyses L-glutaminyl-[protein] + H2O = L-glutamyl-[protein] + NH4(+). In terms of biological role, probably deamidates glutamine residues to glutamate on methyl-accepting chemotaxis receptors (MCPs), playing an important role in chemotaxis. The chain is Probable chemoreceptor glutamine deamidase CheD from Pyrococcus abyssi (strain GE5 / Orsay).